A 377-amino-acid chain; its full sequence is Diels-Alderase fsa2 (377 aa).

Belongs to the Diels-Alderase family.

The catalysed reaction is (5S)-3-[(2E,6R,8E,10E,12E)-2,6-dimethyltetradeca-2,8,10,12-tetraenoyl]-5-(hydroxymethyl)pyrrolidine-2,4-dione = trichosetin. Its pathway is mycotoxin biosynthesis. In terms of biological role, diels-Alderase; part of the gene cluster that mediates the biosynthesis of equisetin, a trans-fused decalin-containing tetramic acid with antimicrobial activity. The PKS module of eqxS together with the enoylreductase eqxC catalyze the formation of the polyketide unit which is then conjugated to L-serine by the condensation domain of the eqxS NRPS module. Activity of the Dieckmann cyclase domain (RED) results in release of the Dieckmann product intermediate. Diels-Alderase eqx3 is involved in endo-selective Diels-Alder cycloaddition to form the decalin ring, leading to the production of N-desmethylequisetin also called trichosetin. Subsequent N-methylation is carried out by eqxD to give equisetin. The polypeptide is Diels-Alderase fsa2 (Fusarium heterosporum).